We begin with the raw amino-acid sequence, 479 residues long: Cell division protein FtsA (479 aa).

The interval 417–458 is disordered; the sequence is QGRQTERKENEQRDNTDRQREDTPKQTVKKKEKTGPSFGDKL. Residues 420 to 440 show a composition bias toward basic and acidic residues; it reads QTERKENEQRDNTDRQREDTP.

The protein belongs to the FtsA/MreB family. In terms of assembly, self-interacts. Interacts with FtsZ.

The protein resides in the cell inner membrane. Its function is as follows. Cell division protein that is involved in the assembly of the Z ring. May serve as a membrane anchor for the Z ring. The polypeptide is Cell division protein FtsA (Porphyromonas gingivalis (strain ATCC BAA-308 / W83)).